Consider the following 410-residue polypeptide: Proteasomal ubiquitin receptor ADRM1 (410 aa).

Residues 17–130 (SSSKYLVEFR…RKVNEYLNNP (114 aa)) form the Pru domain. Residue Ser-18 is modified to Phosphoserine. Low complexity predominate over residues 191–257 (GSGGPATSSS…PAAQTPSLPA (67 aa)). 2 disordered regions span residues 191–264 (GSGG…SSTQ) and 381–410 (FAKA…MSLD). In terms of domain architecture, DEUBAD spans 281–395 (PAMPTEGSGV…EGSDSKTDDG (115 aa)). Basic and acidic residues predominate over residues 381 to 401 (FAKAMEGSDSKTDDGDSKDKK).

It belongs to the ADRM1 family. In terms of assembly, component of the 19S proteasome regulatory particle complex. The 26S proteasome consists of a 20S core particle (CP) and two 19S regulatory subunits (RP).

Its subcellular location is the cytoplasm. The protein resides in the nucleus. Functionally, component of the 26S proteasome, a multiprotein complex involved in the ATP-dependent degradation of ubiquitinated proteins. This complex plays a key role in the maintenance of protein homeostasis by removing misfolded or damaged proteins, which could impair cellular functions, and by removing proteins whose functions are no longer required. Therefore, the proteasome participates in numerous cellular processes, including cell cycle progression, apoptosis, or DNA damage repair. Within the complex, functions as a proteasomal ubiquitin receptor. In Danio rerio (Zebrafish), this protein is Proteasomal ubiquitin receptor ADRM1 (adrm1b).